Consider the following 319-residue polypeptide: MPAMDVLLANPRGFCAGVDRAIEIVKRAIETLGAPIYVRHEVVHNRFVVDDLKQRGAIFVEELDEVPDDATVIFSAHGVSQAVRQEAERRGLRVFDATCPLVTKVHFEVARHCRAGRDVVLIGHAGHPEVEGTMGQWSRERGAGTIYLVEDIEQVATLDVRQPDNLAYTTQTTLSVDDTMGIIEALRARYPAMQGPRHDDICYATQNRQDAVRDLARQCDLVLVVGSPNSSNSNRLSELARRDGVESYLIDNASEIDPAWIVGKQHIGLTAGASAPQVLVDGVLARLRELGAAGVSELEGEPESMVFALPKELRLRLVS.

Position 15 (Cys-15) interacts with [4Fe-4S] cluster. Positions 44 and 77 each coordinate (2E)-4-hydroxy-3-methylbut-2-enyl diphosphate. 2 residues coordinate dimethylallyl diphosphate: His-44 and His-77. The isopentenyl diphosphate site is built by His-44 and His-77. Cys-99 provides a ligand contact to [4Fe-4S] cluster. His-127 contributes to the (2E)-4-hydroxy-3-methylbut-2-enyl diphosphate binding site. His-127 contributes to the dimethylallyl diphosphate binding site. Position 127 (His-127) interacts with isopentenyl diphosphate. The Proton donor role is filled by Glu-129. Residue Thr-172 participates in (2E)-4-hydroxy-3-methylbut-2-enyl diphosphate binding. Cys-202 is a binding site for [4Fe-4S] cluster. Ser-230, Ser-231, Asn-232, and Ser-274 together coordinate (2E)-4-hydroxy-3-methylbut-2-enyl diphosphate. 4 residues coordinate dimethylallyl diphosphate: Ser-230, Ser-231, Asn-232, and Ser-274. Isopentenyl diphosphate contacts are provided by Ser-230, Ser-231, Asn-232, and Ser-274.

Belongs to the IspH family. The cofactor is [4Fe-4S] cluster.

The catalysed reaction is isopentenyl diphosphate + 2 oxidized [2Fe-2S]-[ferredoxin] + H2O = (2E)-4-hydroxy-3-methylbut-2-enyl diphosphate + 2 reduced [2Fe-2S]-[ferredoxin] + 2 H(+). It catalyses the reaction dimethylallyl diphosphate + 2 oxidized [2Fe-2S]-[ferredoxin] + H2O = (2E)-4-hydroxy-3-methylbut-2-enyl diphosphate + 2 reduced [2Fe-2S]-[ferredoxin] + 2 H(+). The protein operates within isoprenoid biosynthesis; dimethylallyl diphosphate biosynthesis; dimethylallyl diphosphate from (2E)-4-hydroxy-3-methylbutenyl diphosphate: step 1/1. Its pathway is isoprenoid biosynthesis; isopentenyl diphosphate biosynthesis via DXP pathway; isopentenyl diphosphate from 1-deoxy-D-xylulose 5-phosphate: step 6/6. In terms of biological role, catalyzes the conversion of 1-hydroxy-2-methyl-2-(E)-butenyl 4-diphosphate (HMBPP) into a mixture of isopentenyl diphosphate (IPP) and dimethylallyl diphosphate (DMAPP). Acts in the terminal step of the DOXP/MEP pathway for isoprenoid precursor biosynthesis. This chain is 4-hydroxy-3-methylbut-2-enyl diphosphate reductase, found in Xanthomonas euvesicatoria pv. vesicatoria (strain 85-10) (Xanthomonas campestris pv. vesicatoria).